A 480-amino-acid polypeptide reads, in one-letter code: Speriolin (480 aa).

The segment at 1-76 is necessary for targeting to centrosomes; the sequence is MSLLTSYEGL…HQGVFLPPAS (76 aa). Residues 2–45 are a coiled coil; sequence SLLTSYEGLRHQIERLVRENEELKKLVRLIRENQELKSAIKTQA. Disordered regions lie at residues 252 to 297 and 305 to 324; these read INNI…SRVM and VEMERKTPHRKSNKLPDNPR.

The protein belongs to the speriolin family. Found in a complex with CDC20, CDC27 and TUBG1. Interacts with CDC20. Expressed in testis. Expressed in pachyten spermatocytes, spermatids and epididymal sperm (at protein level).

Its subcellular location is the cytoplasm. The protein resides in the cytoskeleton. The protein localises to the microtubule organizing center. It is found in the centrosome. In Mus musculus (Mouse), this protein is Speriolin (Spatc1).